Reading from the N-terminus, the 32-residue chain is Photosystem II reaction center protein T (32 aa).

A helical membrane pass occupies residues alanine 3–phenylalanine 23.

This sequence belongs to the PsbT family. PSII is composed of 1 copy each of membrane proteins PsbA, PsbB, PsbC, PsbD, PsbE, PsbF, PsbH, PsbI, PsbJ, PsbK, PsbL, PsbM, PsbT, PsbX, PsbY, PsbZ, Psb30/Ycf12, peripheral proteins PsbO, CyanoQ (PsbQ), PsbU, PsbV and a large number of cofactors. It forms dimeric complexes.

It is found in the cellular thylakoid membrane. Found at the monomer-monomer interface of the photosystem II (PS II) dimer, plays a role in assembly and dimerization of PSII. PSII is a light-driven water plastoquinone oxidoreductase, using light energy to abstract electrons from H(2)O, generating a proton gradient subsequently used for ATP formation. The protein is Photosystem II reaction center protein T of Synechococcus sp. (strain JA-2-3B'a(2-13)) (Cyanobacteria bacterium Yellowstone B-Prime).